Consider the following 415-residue polypeptide: Chorismate synthase (415 aa).

Residues 43-72 (EDLDRRKPGQSMITTSRGEPDKVSIKSGLQ) form a disordered region. Arg-48 provides a ligand contact to NADP(+). FMN contacts are provided by residues 125 to 127 (RSS), Gly-304, 319 to 323 (HAPVS), and Arg-346. Residues 262 to 310 (TDYTEDWEFGESEATASENASGDEPRARGDPKPVGNDHGGIQGGITTGD) are disordered. The segment covering 298-307 (DHGGIQGGIT) has biased composition (gly residues). The segment covering 379–393 (PDRLDDRPGEYDTDY) has biased composition (basic and acidic residues). The segment at 379-415 (PDRLDDRPGEYDTDYHPSSPRNDPEDADTHATTVDED) is disordered.

Belongs to the chorismate synthase family. Requires FMNH2 as cofactor.

The catalysed reaction is 5-O-(1-carboxyvinyl)-3-phosphoshikimate = chorismate + phosphate. Its pathway is metabolic intermediate biosynthesis; chorismate biosynthesis; chorismate from D-erythrose 4-phosphate and phosphoenolpyruvate: step 7/7. In terms of biological role, catalyzes the anti-1,4-elimination of the C-3 phosphate and the C-6 proR hydrogen from 5-enolpyruvylshikimate-3-phosphate (EPSP) to yield chorismate, which is the branch point compound that serves as the starting substrate for the three terminal pathways of aromatic amino acid biosynthesis. This reaction introduces a second double bond into the aromatic ring system. The protein is Chorismate synthase of Halomicrobium mukohataei (strain ATCC 700874 / DSM 12286 / JCM 9738 / NCIMB 13541) (Haloarcula mukohataei).